A 369-amino-acid polypeptide reads, in one-letter code: C-C chemokine receptor type 9 (369 aa).

The Extracellular portion of the chain corresponds to 1–48 (MMPTELTSLIPGMFDDFSYDSTASTDDYMNLNFSSFFCKKNNVRQFAS). N-linked (GlcNAc...) asparagine glycosylation is present at Asn32. 2 disulfides stabilise this stretch: Cys38/Cys289 and Cys119/Cys198. Residues 49–74 (HFLPPLYWLVFIVGTLGNSLVILVYW) form a helical membrane-spanning segment. Topologically, residues 75 to 85 (YCTRVKTMTDM) are cytoplasmic. Residues 86–109 (FLLNLAIADLLFLATLPFWAIAAA) form a helical membrane-spanning segment. Residues 110-120 (GQWMFQTFMCK) lie on the Extracellular side of the membrane. The chain crosses the membrane as a helical span at residues 121 to 150 (VVNSMYKMNFYSCVLLIMCISVDRYIAIVQ). The Cytoplasmic segment spans residues 151 to 159 (AMKAQVWRQ). The chain crosses the membrane as a helical span at residues 160–185 (KRLLYSKMVCITIWVMAAVLCTPEIL). Residues 186 to 208 (YSQVSGESGIATCTMVYPKDKNA) lie on the Extracellular side of the membrane. Residues 209-243 (KLKSAVLILKVTLGFFLPFMVMAFCYTIIIHTLVQ) form a helical membrane-spanning segment. At 244-248 (AKKSS) the chain is on the cytoplasmic side. The chain crosses the membrane as a helical span at residues 249–283 (KHKALKVTITVLTVFIMSQFPYNSILVVQAVDAYA). Over 284–290 (MFISNCT) the chain is Extracellular. The chain crosses the membrane as a helical span at residues 291–321 (ISTNIDICFQVTQTIAFFHSCLNPVLYVFVG). Over 322–369 (ERFRRDLVKTLKNLGCISQAQWVSFTRREGSLKLSSMLLETTSGALSL) the chain is Cytoplasmic.

It belongs to the G-protein coupled receptor 1 family. As to expression, highly expressed in the thymus and low in lymph nodes and spleen.

It is found in the cell membrane. Its function is as follows. Receptor for chemokine SCYA25/TECK. Subsequently transduces a signal by increasing the intracellular calcium ions level. The chain is C-C chemokine receptor type 9 (Ccr9) from Mus musculus (Mouse).